The primary structure comprises 375 residues: N-acetyldiaminopimelate deacetylase (375 aa).

Residue D69 is part of the active site. Residue E128 is the Proton acceptor of the active site.

It belongs to the peptidase M20A family. N-acetyldiaminopimelate deacetylase subfamily.

It catalyses the reaction N-acetyl-(2S,6S)-2,6-diaminopimelate + H2O = (2S,6S)-2,6-diaminopimelate + acetate. The protein operates within amino-acid biosynthesis; L-lysine biosynthesis via DAP pathway; LL-2,6-diaminopimelate from (S)-tetrahydrodipicolinate (acetylase route): step 3/3. Catalyzes the conversion of N-acetyl-diaminopimelate to diaminopimelate and acetate. The polypeptide is N-acetyldiaminopimelate deacetylase (Streptococcus suis (strain 05ZYH33)).